The sequence spans 105 residues: Met repressor (105 aa).

It belongs to the MetJ family. Homodimer.

The protein resides in the cytoplasm. Its function is as follows. This regulatory protein, when combined with SAM (S-adenosylmethionine) represses the expression of the methionine regulon and of enzymes involved in SAM synthesis. The sequence is that of Met repressor from Haemophilus ducreyi (strain 35000HP / ATCC 700724).